We begin with the raw amino-acid sequence, 673 residues long: MSKPFKLNSAFKPSGDQPDAIRRLEEGLEDGLAHQTLLGVTGSGKTFTIANVIADLQRPTMVLAPNKTLAAQLYGEMKEFFPENAVEYFVSYYDYYQPEAYVPSSDTFIEKDASVNEHIEQMRLSATKALLERRDVVVVASVSAIYGLGDPDLYLKMMLHLTVGMLIDQRAILRRLAELQYTRNDQAFQRGTFRVRGEVIDIFPAESDDIALRVELFDEEVERLSLFDPLTGQVEATVPRYTIYPKTHYVTPRERILQAMEEIKDELADRRKVLLANNKLLEEQRLSQRTQFDLEMMNELGYCSGIENYSRFLSGRGPGEPPPTLFDYLPADGLLVVDESHVTIPQIGGMYRGDRARKETLVEYGFRLPSALDNRPLKFEEFEALAPQTIYVSATPGNYELEKSGDEVVDQVVRPTGLLDPIIEVRPVATQVDDLLSEIRQRAVINERVLVTTLTKRMAEDLTEYLEEHGERVRYLHSDIDTVERMEIIRDLRLGEFDVLVGINLLREGLDMPEVSLVAILDADKEGFLRSERSLIQTIGRAARNVNGKAILYGDKITPSMAKAIGETERRREKQQKYNEEHGITPQGLNKKVVDILALGQNIAKTKAKGKGKGRSTAKTGIVELDMTPKALQQKIHELEGQMMQHAQNLEFEEAAQIRDQLHQLRELFIAAS.

The Helicase ATP-binding domain occupies 26–183; it reads EGLEDGLAHQ…RRLAELQYTR (158 aa). 39–46 lines the ATP pocket; that stretch reads GVTGSGKT. Residues 92 to 115 carry the Beta-hairpin motif; that stretch reads YYDYYQPEAYVPSSDTFIEKDASV. Residues 431–597 form the Helicase C-terminal domain; sequence QVDDLLSEIR…GLNKKVVDIL (167 aa). The 36-residue stretch at 633-668 folds into the UVR domain; that stretch reads QQKIHELEGQMMQHAQNLEFEEAAQIRDQLHQLREL.

The protein belongs to the UvrB family. In terms of assembly, forms a heterotetramer with UvrA during the search for lesions. Interacts with UvrC in an incision complex.

It is found in the cytoplasm. In terms of biological role, the UvrABC repair system catalyzes the recognition and processing of DNA lesions. A damage recognition complex composed of 2 UvrA and 2 UvrB subunits scans DNA for abnormalities. Upon binding of the UvrA(2)B(2) complex to a putative damaged site, the DNA wraps around one UvrB monomer. DNA wrap is dependent on ATP binding by UvrB and probably causes local melting of the DNA helix, facilitating insertion of UvrB beta-hairpin between the DNA strands. Then UvrB probes one DNA strand for the presence of a lesion. If a lesion is found the UvrA subunits dissociate and the UvrB-DNA preincision complex is formed. This complex is subsequently bound by UvrC and the second UvrB is released. If no lesion is found, the DNA wraps around the other UvrB subunit that will check the other stand for damage. This is UvrABC system protein B from Salmonella arizonae (strain ATCC BAA-731 / CDC346-86 / RSK2980).